Here is a 214-residue protein sequence, read N- to C-terminus: Ribosomal RNA large subunit methyltransferase E (214 aa).

S-adenosyl-L-methionine is bound by residues Gly-60, Trp-62, Asp-86, Asp-102, and Asp-127. Lys-167 acts as the Proton acceptor in catalysis.

It belongs to the class I-like SAM-binding methyltransferase superfamily. RNA methyltransferase RlmE family.

The protein resides in the cytoplasm. It carries out the reaction uridine(2552) in 23S rRNA + S-adenosyl-L-methionine = 2'-O-methyluridine(2552) in 23S rRNA + S-adenosyl-L-homocysteine + H(+). Functionally, specifically methylates the uridine in position 2552 of 23S rRNA at the 2'-O position of the ribose in the fully assembled 50S ribosomal subunit. This Janthinobacterium sp. (strain Marseille) (Minibacterium massiliensis) protein is Ribosomal RNA large subunit methyltransferase E.